We begin with the raw amino-acid sequence, 346 residues long: Phosphoribosylformylglycinamidine cyclo-ligase (346 aa).

It belongs to the AIR synthase family.

The protein resides in the cytoplasm. It carries out the reaction 2-formamido-N(1)-(5-O-phospho-beta-D-ribosyl)acetamidine + ATP = 5-amino-1-(5-phospho-beta-D-ribosyl)imidazole + ADP + phosphate + H(+). Its pathway is purine metabolism; IMP biosynthesis via de novo pathway; 5-amino-1-(5-phospho-D-ribosyl)imidazole from N(2)-formyl-N(1)-(5-phospho-D-ribosyl)glycinamide: step 2/2. The sequence is that of Phosphoribosylformylglycinamidine cyclo-ligase from Bacillus anthracis (strain A0248).